Reading from the N-terminus, the 274-residue chain is Thiamine kinase (274 aa).

The protein belongs to the thiamine kinase family.

The enzyme catalyses thiamine + ATP = thiamine phosphate + ADP + H(+). It functions in the pathway cofactor biosynthesis; thiamine diphosphate biosynthesis; thiamine phosphate from thiamine: step 1/1. Functionally, catalyzes the ATP-dependent phosphorylation of thiamine to thiamine phosphate. Is involved in thiamine salvage. The protein is Thiamine kinase of Salmonella dublin (strain CT_02021853).